A 269-amino-acid chain; its full sequence is Staphylococcal secretory antigen ssaA2 (269 aa).

An N-terminal signal peptide occupies residues 1-27; that stretch reads MKKIATATIATAGFATIAIASGNQAHA. 7 consecutive repeat copies span residues 83–85, 88–90, 91–93, 97–99, 103–105, 106–108, and 115–117. The segment at 83–115 is 7 X 3 AA repeats of Y-[NS]-N; it reads YNNYSYNNYNNGYSYNNYSRYNNYSNNNQSYNY. In terms of domain architecture, Peptidase C51 spans 148–269; that stretch reads MAPSSNGRSI…SQAAGYNFIH (122 aa).

The protein localises to the secreted. Its function is as follows. Not known; immunogenic protein. In Staphylococcus aureus (strain MRSA252), this protein is Staphylococcal secretory antigen ssaA2 (ssaA2).